A 214-amino-acid chain; its full sequence is Histidine biosynthesis bifunctional protein HisIE (214 aa).

The segment at 1-114 (MDLSAVRFDE…LEGEKDLGFV (114 aa)) is phosphoribosyl-AMP cyclohydrolase. The segment at 115–214 (VGQVYATIKE…RSPYDGSHGN (100 aa)) is phosphoribosyl-ATP pyrophosphohydrolase.

It in the N-terminal section; belongs to the PRA-CH family. This sequence in the C-terminal section; belongs to the PRA-PH family.

It is found in the cytoplasm. The catalysed reaction is 1-(5-phospho-beta-D-ribosyl)-ATP + H2O = 1-(5-phospho-beta-D-ribosyl)-5'-AMP + diphosphate + H(+). It catalyses the reaction 1-(5-phospho-beta-D-ribosyl)-5'-AMP + H2O = 1-(5-phospho-beta-D-ribosyl)-5-[(5-phospho-beta-D-ribosylamino)methylideneamino]imidazole-4-carboxamide. The protein operates within amino-acid biosynthesis; L-histidine biosynthesis; L-histidine from 5-phospho-alpha-D-ribose 1-diphosphate: step 2/9. Its pathway is amino-acid biosynthesis; L-histidine biosynthesis; L-histidine from 5-phospho-alpha-D-ribose 1-diphosphate: step 3/9. The polypeptide is Histidine biosynthesis bifunctional protein HisIE (Thermus thermophilus (strain ATCC BAA-163 / DSM 7039 / HB27)).